Reading from the N-terminus, the 132-residue chain is Sirohydrochlorin cobaltochelatase (132 aa).

The active-site Proton acceptor is His10. His10 is a Co(2+) binding site. Residues Arg46 and 69 to 74 (ISYGLH) each bind substrate. A Co(2+)-binding site is contributed by His74.

Belongs to the CbiX family. CbiXS subfamily. In terms of assembly, homotetramer; dimer of dimers.

The catalysed reaction is Co-sirohydrochlorin + 2 H(+) = sirohydrochlorin + Co(2+). Its pathway is cofactor biosynthesis; adenosylcobalamin biosynthesis; cob(II)yrinate a,c-diamide from sirohydrochlorin (anaerobic route): step 1/10. Its function is as follows. Catalyzes the insertion of Co(2+) into sirohydrochlorin as part of the anaerobic pathway to cobalamin biosynthesis. This chain is Sirohydrochlorin cobaltochelatase, found in Archaeoglobus fulgidus (strain ATCC 49558 / DSM 4304 / JCM 9628 / NBRC 100126 / VC-16).